We begin with the raw amino-acid sequence, 304 residues long: HTH-type transcriptional regulator BenM (304 aa).

In terms of domain architecture, HTH lysR-type spans 1 to 58 (MELRHLRYFVAVVEEQSFTKAADKLCIAQPPLSRQIQNLEEELGIQLLERGSRPVKTT). Positions 18 to 37 (FTKAADKLCIAQPPLSRQIQ) form a DNA-binding region, H-T-H motif. Positions 99 and 104 each coordinate benzoate. Residue Ser-99 participates in cis,cis-muconate binding. Cis,cis-muconate is bound at residue Thr-128. Residues Phe-144, Arg-160, and Asn-202 each coordinate benzoate. Position 203 (Phe-203) interacts with cis,cis-muconate. Position 293 (Tyr-293) interacts with benzoate.

Belongs to the LysR transcriptional regulatory family. In terms of assembly, homotetramer; dimer of dimers. The dimers can also associate to form linear, higher oligomers (in vitro).

Positive regulator of the ben and cat genes for benzoate degradation. BenM is necessary for ben gene expression but not for expression of the cat genes, which can be regulated by CatM. Binds to the inducers cis,cis-muconate and benzoate. In Acinetobacter baylyi (strain ATCC 33305 / BD413 / ADP1), this protein is HTH-type transcriptional regulator BenM (benM).